The primary structure comprises 549 residues: Chaperonin GroEL (549 aa).

Residues 30–33 (TLGP), K51, 87–91 (DGTTT), G415, and D495 contribute to the ATP site.

It belongs to the chaperonin (HSP60) family. Forms a cylinder of 14 subunits composed of two heptameric rings stacked back-to-back. Interacts with the co-chaperonin GroES.

It localises to the cytoplasm. It carries out the reaction ATP + H2O + a folded polypeptide = ADP + phosphate + an unfolded polypeptide.. In terms of biological role, together with its co-chaperonin GroES, plays an essential role in assisting protein folding. The GroEL-GroES system forms a nano-cage that allows encapsulation of the non-native substrate proteins and provides a physical environment optimized to promote and accelerate protein folding. The polypeptide is Chaperonin GroEL (Colwellia maris).